Reading from the N-terminus, the 487-residue chain is Sensor protein CseC (487 aa).

Residues Met-1–Ala-11 show a composition bias toward low complexity. The segment at Met-1–Arg-41 is disordered. Helical transmembrane passes span Ile-63 to His-83 and Ala-185 to Gly-205. In terms of domain architecture, HAMP spans Gly-206 to Glu-262. Residues Asp-270 to Ala-472 enclose the Histidine kinase domain. Position 273 is a phosphohistidine; by autocatalysis (His-273).

It localises to the cell membrane. The catalysed reaction is ATP + protein L-histidine = ADP + protein N-phospho-L-histidine.. This Streptomyces avermitilis (strain ATCC 31267 / DSM 46492 / JCM 5070 / NBRC 14893 / NCIMB 12804 / NRRL 8165 / MA-4680) protein is Sensor protein CseC (cseC).